A 131-amino-acid polypeptide reads, in one-letter code: Small ribosomal subunit protein uS8 (131 aa).

The protein belongs to the universal ribosomal protein uS8 family. In terms of assembly, part of the 30S ribosomal subunit. Contacts proteins S5 and S12.

In terms of biological role, one of the primary rRNA binding proteins, it binds directly to 16S rRNA central domain where it helps coordinate assembly of the platform of the 30S subunit. This chain is Small ribosomal subunit protein uS8, found in Paraburkholderia phymatum (strain DSM 17167 / CIP 108236 / LMG 21445 / STM815) (Burkholderia phymatum).